The sequence spans 1501 residues: Ribulose bisphosphate carboxylase (1501 aa).

Substrate is bound at residue asparagine 111. The Proton acceptor role is filled by lysine 166. Substrate is bound at residue lysine 168. Mg(2+) contacts are provided by lysine 191, aspartate 193, and glutamate 194. Residue lysine 191 is modified to N6-carboxylysine. Residue histidine 287 is the Proton acceptor of the active site. Residues arginine 288, histidine 321, and serine 368 each coordinate substrate. A propeptide spans 486-508 (SAAAFVGASVAPAKKENVVARQA) (linker). Asparagine 619 lines the substrate pocket. Residue lysine 674 is the Proton acceptor of the active site. Lysine 676 contributes to the substrate binding site. Residues lysine 699, aspartate 701, and glutamate 702 each contribute to the Mg(2+) site. The residue at position 699 (lysine 699) is an N6-carboxylysine. Histidine 795 (proton acceptor) is an active-site residue. 3 residues coordinate substrate: arginine 796, histidine 829, and serine 876. Positions 994–1016 (SAAAFVGASVAPAKKENVVARQA) are cleaved as a propeptide — linker. Asparagine 1127 provides a ligand contact to substrate. Lysine 1182 (proton acceptor) is an active-site residue. Lysine 1184 contributes to the substrate binding site. Residues lysine 1207, aspartate 1209, and glutamate 1210 each contribute to the Mg(2+) site. The residue at position 1207 (lysine 1207) is an N6-carboxylysine. The Proton acceptor role is filled by histidine 1303. The substrate site is built by arginine 1304, histidine 1337, and serine 1384.

The protein belongs to the RuBisCO large chain family. Type II subfamily. As to quaternary structure, homodimer. Mg(2+) is required as a cofactor.

The protein localises to the plastid. It is found in the chloroplast. It carries out the reaction 2 (2R)-3-phosphoglycerate + 2 H(+) = D-ribulose 1,5-bisphosphate + CO2 + H2O. The catalysed reaction is D-ribulose 1,5-bisphosphate + O2 = 2-phosphoglycolate + (2R)-3-phosphoglycerate + 2 H(+). In terms of biological role, ruBisCO catalyzes two reactions: the carboxylation of D-ribulose 1,5-bisphosphate, the primary event in carbon dioxide fixation, as well as the oxidative fragmentation of the pentose substrate. Both reactions occur simultaneously and in competition at the same active site. In Symbiodinium sp. (Dinoflagellate), this protein is Ribulose bisphosphate carboxylase (rbcL).